The primary structure comprises 854 residues: Protein translocase subunit SecA (854 aa).

Residues Q89, 107–111 (GEGKT), and D501 contribute to the ATP site.

The protein belongs to the SecA family. Monomer and homodimer. Part of the essential Sec protein translocation apparatus which comprises SecA, SecYEG and auxiliary proteins SecDF-YajC and YidC.

It localises to the cell inner membrane. The protein resides in the cytoplasm. The enzyme catalyses ATP + H2O + cellular proteinSide 1 = ADP + phosphate + cellular proteinSide 2.. Part of the Sec protein translocase complex. Interacts with the SecYEG preprotein conducting channel. Has a central role in coupling the hydrolysis of ATP to the transfer of proteins into and across the cell membrane, serving both as a receptor for the preprotein-SecB complex and as an ATP-driven molecular motor driving the stepwise translocation of polypeptide chains across the membrane. The sequence is that of Protein translocase subunit SecA from Pelagibacter ubique (strain HTCC1062).